We begin with the raw amino-acid sequence, 396 residues long: S-adenosylmethionine synthase 3 (396 aa).

Position 12 (Glu12) interacts with Mg(2+). His18 is an ATP binding site. Glu46 serves as a coordination point for K(+). L-methionine-binding residues include Glu59 and Gln102. Residues 170-172, 238-241, Asp249, 255-256, Ala272, Lys276, and Lys280 each bind ATP; these read DGK, SGRF, and RK. Position 249 (Asp249) interacts with L-methionine. Lys280 serves as a coordination point for L-methionine.

The protein belongs to the AdoMet synthase family. Homotetramer. Mn(2+) serves as cofactor. It depends on Mg(2+) as a cofactor. The cofactor is Co(2+). Requires K(+) as cofactor.

The protein resides in the cytoplasm. It catalyses the reaction L-methionine + ATP + H2O = S-adenosyl-L-methionine + phosphate + diphosphate. The protein operates within amino-acid biosynthesis; S-adenosyl-L-methionine biosynthesis; S-adenosyl-L-methionine from L-methionine: step 1/1. In terms of biological role, catalyzes the formation of S-adenosylmethionine from methionine and ATP. The reaction comprises two steps that are both catalyzed by the same enzyme: formation of S-adenosylmethionine (AdoMet) and triphosphate, and subsequent hydrolysis of the triphosphate. The polypeptide is S-adenosylmethionine synthase 3 (METK3) (Oryza sativa subsp. japonica (Rice)).